The sequence spans 122 residues: S-adenosylmethionine decarboxylase proenzyme (122 aa).

Ser69 functions as the Schiff-base intermediate with substrate; via pyruvic acid in the catalytic mechanism. A Pyruvic acid (Ser); by autocatalysis modification is found at Ser69. The Proton acceptor; for processing activity role is filled by His74. Cys89 acts as the Proton donor; for catalytic activity in catalysis.

Belongs to the prokaryotic AdoMetDC family. Type 1 subfamily. Heterotetramer of two alpha and two beta chains arranged as a dimer of alpha/beta heterodimers. Pyruvate serves as cofactor. Post-translationally, is synthesized initially as an inactive proenzyme. Formation of the active enzyme involves a self-maturation process in which the active site pyruvoyl group is generated from an internal serine residue via an autocatalytic post-translational modification. Two non-identical subunits are generated from the proenzyme in this reaction, and the pyruvate is formed at the N-terminus of the alpha chain, which is derived from the carboxyl end of the proenzyme. The post-translation cleavage follows an unusual pathway, termed non-hydrolytic serinolysis, in which the side chain hydroxyl group of the serine supplies its oxygen atom to form the C-terminus of the beta chain, while the remainder of the serine residue undergoes an oxidative deamination to produce ammonia and the pyruvoyl group blocking the N-terminus of the alpha chain.

It carries out the reaction S-adenosyl-L-methionine + H(+) = S-adenosyl 3-(methylsulfanyl)propylamine + CO2. It functions in the pathway amine and polyamine biosynthesis; S-adenosylmethioninamine biosynthesis; S-adenosylmethioninamine from S-adenosyl-L-methionine: step 1/1. Functionally, catalyzes the decarboxylation of S-adenosylmethionine to S-adenosylmethioninamine (dcAdoMet), the propylamine donor required for the synthesis of the polyamines spermine and spermidine from the diamine putrescine. The chain is S-adenosylmethionine decarboxylase proenzyme from Sulfurisphaera tokodaii (strain DSM 16993 / JCM 10545 / NBRC 100140 / 7) (Sulfolobus tokodaii).